Consider the following 336-residue polypeptide: Homoserine dehydrogenase (336 aa).

Phe-8 contributes to the NADPH binding site. NAD(+)-binding residues include Ala-10, Ile-11, and Thr-94. NADPH contacts are provided by Ile-11, Thr-94, and Lys-123. Positions 11, 94, and 123 each coordinate NADP(+). Na(+) is bound by residues Glu-147, Val-150, and Gly-152. NADP(+) contacts are provided by Gly-205 and Glu-208. 2 residues coordinate L-homoserine: Glu-208 and Asp-219. Lys-223 serves as the catalytic Proton donor. Position 315 (Gly-315) interacts with NADPH. Gly-315 lines the NAD(+) pocket. Gly-315 provides a ligand contact to NADP(+).

It belongs to the homoserine dehydrogenase family. The cofactor is a metal cation.

It catalyses the reaction L-homoserine + NADP(+) = L-aspartate 4-semialdehyde + NADPH + H(+). The catalysed reaction is L-homoserine + NAD(+) = L-aspartate 4-semialdehyde + NADH + H(+). Its pathway is amino-acid biosynthesis; L-methionine biosynthesis via de novo pathway; L-homoserine from L-aspartate: step 3/3. It participates in amino-acid biosynthesis; L-threonine biosynthesis; L-threonine from L-aspartate: step 3/5. Its function is as follows. Catalyzes the conversion of L-aspartate-beta-semialdehyde (L-Asa) to L-homoserine (L-Hse), the third step in the biosynthesis of threonine and methionine from aspartate. This is Homoserine dehydrogenase (hom) from Methanocaldococcus jannaschii (strain ATCC 43067 / DSM 2661 / JAL-1 / JCM 10045 / NBRC 100440) (Methanococcus jannaschii).